Consider the following 157-residue polypeptide: Transcriptional repressor NrdR (157 aa).

A zinc finger spans residues 3–34 (CPFCRHPDSRVVDSRTSDDGLSIRRRRQCPEC). The region spanning 46–136 (LSVIKRNGVV…VYQGFDSLDD (91 aa)) is the ATP-cone domain.

This sequence belongs to the NrdR family. Zn(2+) serves as cofactor.

In terms of biological role, negatively regulates transcription of bacterial ribonucleotide reductase nrd genes and operons by binding to NrdR-boxes. In Clavibacter michiganensis subsp. michiganensis (strain NCPPB 382), this protein is Transcriptional repressor NrdR.